Reading from the N-terminus, the 144-residue chain is Large ribosomal subunit protein uL11 (144 aa).

It belongs to the universal ribosomal protein uL11 family. Part of the ribosomal stalk of the 50S ribosomal subunit. Interacts with L10 and the large rRNA to form the base of the stalk. L10 forms an elongated spine to which L12 dimers bind in a sequential fashion forming a multimeric L10(L12)X complex. One or more lysine residues are methylated.

In terms of biological role, forms part of the ribosomal stalk which helps the ribosome interact with GTP-bound translation factors. The polypeptide is Large ribosomal subunit protein uL11 (Deinococcus geothermalis (strain DSM 11300 / CIP 105573 / AG-3a)).